The sequence spans 866 residues: Probable outer membrane usher protein ElfC (866 aa).

The first 35 residues, 1–35, serve as a signal peptide directing secretion; it reads MYRTHRQHSLLSSGGVPSFIGGLVVFVSAAFNAQA.

The protein belongs to the fimbrial export usher family.

The protein resides in the cell outer membrane. Its function is as follows. Part of the elfADCG-ycbUVF fimbrial operon, which promotes adhesion of bacteria to different abiotic surfaces. Could be involved in the export and assembly of the ElfA fimbrial subunits across the outer membrane. In Escherichia coli (strain K12), this protein is Probable outer membrane usher protein ElfC (elfC).